The sequence spans 195 residues: Guanylate kinase (195 aa).

One can recognise a Guanylate kinase-like domain in the interval 12-191 (GLIILISGPS…TIEDIKQLIL (180 aa)). Position 19–26 (19–26 (GPSGVGKG)) interacts with ATP.

This sequence belongs to the guanylate kinase family.

The protein localises to the cytoplasm. The enzyme catalyses GMP + ATP = GDP + ADP. In terms of biological role, essential for recycling GMP and indirectly, cGMP. The polypeptide is Guanylate kinase (gmk) (Mycoplasmoides gallisepticum (strain R(low / passage 15 / clone 2)) (Mycoplasma gallisepticum)).